The following is a 146-amino-acid chain: Anti-sigma F factor (146 aa).

It belongs to the anti-sigma-factor family.

The catalysed reaction is L-seryl-[protein] + ATP = O-phospho-L-seryl-[protein] + ADP + H(+). The enzyme catalyses L-threonyl-[protein] + ATP = O-phospho-L-threonyl-[protein] + ADP + H(+). Its function is as follows. Binds to sigma F and blocks its ability to form an RNA polymerase holoenzyme (E-sigma F). Phosphorylates SpoIIAA on a serine residue. This phosphorylation may enable SpoIIAA to act as an anti-anti-sigma factor that counteracts SpoIIAB and thus releases sigma F from inhibition. The sequence is that of Anti-sigma F factor from Geobacillus kaustophilus (strain HTA426).